The chain runs to 450 residues: Glutamate--tRNA ligase 2 (450 aa).

A 'HIGH' region motif is present at residues 10–20 (PSPTGFLHIGG). The 'KMSKS' region motif lies at 232 to 236 (KLSKR). K235 serves as a coordination point for ATP.

It belongs to the class-I aminoacyl-tRNA synthetase family. Glutamate--tRNA ligase type 1 subfamily. As to quaternary structure, monomer.

It localises to the cytoplasm. It catalyses the reaction tRNA(Glu) + L-glutamate + ATP = L-glutamyl-tRNA(Glu) + AMP + diphosphate. Functionally, catalyzes the attachment of glutamate to tRNA(Glu) in a two-step reaction: glutamate is first activated by ATP to form Glu-AMP and then transferred to the acceptor end of tRNA(Glu). In Wolbachia pipientis subsp. Culex pipiens (strain wPip), this protein is Glutamate--tRNA ligase 2.